The chain runs to 82 residues: uncharacterized protein (82 aa).

The segment covering 29 to 38 has biased composition (low complexity); sequence TATKSTSSGS. The disordered stretch occupies residues 29–64; that stretch reads TATKSTSSGSVPSFFTESTSTPLNQSKTNTSTLNKS. The segment covering 39–50 has biased composition (polar residues); that stretch reads VPSFFTESTSTP. A compositionally biased stretch (low complexity) spans 51 to 64; it reads LNQSKTNTSTLNKS.

This is an uncharacterized protein from Dictyostelium discoideum (Social amoeba).